We begin with the raw amino-acid sequence, 559 residues long: Proline--tRNA ligase (559 aa).

It belongs to the class-II aminoacyl-tRNA synthetase family. ProS type 1 subfamily. As to quaternary structure, homodimer.

The protein resides in the cytoplasm. It carries out the reaction tRNA(Pro) + L-proline + ATP = L-prolyl-tRNA(Pro) + AMP + diphosphate. Catalyzes the attachment of proline to tRNA(Pro) in a two-step reaction: proline is first activated by ATP to form Pro-AMP and then transferred to the acceptor end of tRNA(Pro). As ProRS can inadvertently accommodate and process non-cognate amino acids such as alanine and cysteine, to avoid such errors it has two additional distinct editing activities against alanine. One activity is designated as 'pretransfer' editing and involves the tRNA(Pro)-independent hydrolysis of activated Ala-AMP. The other activity is designated 'posttransfer' editing and involves deacylation of mischarged Ala-tRNA(Pro). The misacylated Cys-tRNA(Pro) is not edited by ProRS. The chain is Proline--tRNA ligase from Ruthia magnifica subsp. Calyptogena magnifica.